The chain runs to 482 residues: tRNA sulfurtransferase (482 aa).

The THUMP domain maps to 61-165; sequence DVTLAVLTQT…NDKLNLIIAR (105 aa). Residues 183–184, lysine 265, glycine 287, and glutamine 296 contribute to the ATP site; that span reads LI. Cysteine 344 and cysteine 456 form a disulfide bridge. Residues 404 to 482 enclose the Rhodanese domain; it reads LGSDVVVLDI…GYKNVKVYRP (79 aa). The active-site Cysteine persulfide intermediate is the cysteine 456.

This sequence belongs to the ThiI family.

It is found in the cytoplasm. It catalyses the reaction [ThiI sulfur-carrier protein]-S-sulfanyl-L-cysteine + a uridine in tRNA + 2 reduced [2Fe-2S]-[ferredoxin] + ATP + H(+) = [ThiI sulfur-carrier protein]-L-cysteine + a 4-thiouridine in tRNA + 2 oxidized [2Fe-2S]-[ferredoxin] + AMP + diphosphate. The catalysed reaction is [ThiS sulfur-carrier protein]-C-terminal Gly-Gly-AMP + S-sulfanyl-L-cysteinyl-[cysteine desulfurase] + AH2 = [ThiS sulfur-carrier protein]-C-terminal-Gly-aminoethanethioate + L-cysteinyl-[cysteine desulfurase] + A + AMP + 2 H(+). It functions in the pathway cofactor biosynthesis; thiamine diphosphate biosynthesis. In terms of biological role, catalyzes the ATP-dependent transfer of a sulfur to tRNA to produce 4-thiouridine in position 8 of tRNAs, which functions as a near-UV photosensor. Also catalyzes the transfer of sulfur to the sulfur carrier protein ThiS, forming ThiS-thiocarboxylate. This is a step in the synthesis of thiazole, in the thiamine biosynthesis pathway. The sulfur is donated as persulfide by IscS. The sequence is that of tRNA sulfurtransferase from Aliivibrio fischeri (strain ATCC 700601 / ES114) (Vibrio fischeri).